A 271-amino-acid polypeptide reads, in one-letter code: Eukaryotic translation initiation factor 2 subunit beta (271 aa).

Residues 223–247 form a C4-type zinc finger; it reads CLGCQSPDTILSKENRLFFLRCEKC.

The protein belongs to the eIF-2-beta/eIF-5 family. As to quaternary structure, eukaryotic translation initiation factor 2 eIF2 is a heterotrimeric complex composed of an alpha, a beta and a gamma subunit.

It localises to the cytoplasm. It is found in the cytosol. Its function is as follows. Component of the eIF2 complex that functions in the early steps of protein synthesis by forming a ternary complex with GTP and initiator tRNA. This complex binds to a 40S ribosomal subunit, followed by mRNA binding to form a 43S pre-initiation complex (43S PIC). Junction of the 60S ribosomal subunit to form the 80S initiation complex is preceded by hydrolysis of the GTP bound to eIF2 and release of an eIF2-GDP binary complex. In order for eIF2 to recycle and catalyze another round of initiation, the GDP bound to eIF2 must exchange with GTP by way of a reaction catalyzed by eIF2B. In Malus domestica (Apple), this protein is Eukaryotic translation initiation factor 2 subunit beta.